The primary structure comprises 971 residues: uncharacterized protein (971 aa).

The signal sequence occupies residues 1 to 24 (MQSNLLKVLGVLAIVATLVCFIFA). Residues 127–146 (RTRPGKSNLDDSGQMIPIPR) are disordered. The next 6 membrane-spanning stretches (helical) occupy residues 611 to 631 (IKAI…LGFA), 721 to 741 (LGLS…IVII), 753 to 773 (AFMA…FLLF), 795 to 815 (VVMM…LDFV), 832 to 852 (FIGT…INWF), and 865 to 885 (GVNM…YGYV). The disordered stretch occupies residues 933 to 971 (TGRAKSRLEQRNRTLEHAEQNSKKYKKRIGENTNEETLK). Residues 938–954 (SRLEQRNRTLEHAEQNS) show a composition bias toward basic and acidic residues.

Belongs to the TrbL/VirB6 family.

Its subcellular location is the cell membrane. This is an uncharacterized protein from Rickettsia prowazekii (strain Madrid E).